A 451-amino-acid polypeptide reads, in one-letter code: 3-carboxy-cis,cis-muconate cycloisomerase (451 aa).

The protein belongs to the class-II fumarase/aspartase family. In terms of assembly, homotetramer.

It catalyses the reaction 2-(carboxymethyl)-5-oxo-2,5-dihydro-2-furoate = 3-carboxy-cis,cis-muconate + H(+). The protein operates within aromatic compound metabolism; beta-ketoadipate pathway; 5-oxo-4,5-dihydro-2-furylacetate from 3-carboxy-cis,cis-muconate: step 1/2. Its function is as follows. Catalyzes an anti cycloisomerization. This chain is 3-carboxy-cis,cis-muconate cycloisomerase (pcaB), found in Acinetobacter baylyi (strain ATCC 33305 / BD413 / ADP1).